The sequence spans 662 residues: UvrABC system protein B (662 aa).

The Helicase ATP-binding domain maps to 31–188; sequence DNIEGGEKAQ…NDLVDIQFER (158 aa). 44–51 contributes to the ATP binding site; it reads GATGTGKT. The short motif at 97-120 is the Beta-hairpin element; it reads YYDYYQPEAYVPSSDTYIEKDSSV. Residues 435 to 601 form the Helicase C-terminal domain; that stretch reads QIDDLLGEIN…TIKKEIRDLI (167 aa). Residues 626–661 enclose the UVR domain; the sequence is KDMIKKLEGQMQEAAGLLDFELAAQIRDMILEIKAM.

This sequence belongs to the UvrB family. In terms of assembly, forms a heterotetramer with UvrA during the search for lesions. Interacts with UvrC in an incision complex.

It is found in the cytoplasm. Functionally, the UvrABC repair system catalyzes the recognition and processing of DNA lesions. A damage recognition complex composed of 2 UvrA and 2 UvrB subunits scans DNA for abnormalities. Upon binding of the UvrA(2)B(2) complex to a putative damaged site, the DNA wraps around one UvrB monomer. DNA wrap is dependent on ATP binding by UvrB and probably causes local melting of the DNA helix, facilitating insertion of UvrB beta-hairpin between the DNA strands. Then UvrB probes one DNA strand for the presence of a lesion. If a lesion is found the UvrA subunits dissociate and the UvrB-DNA preincision complex is formed. This complex is subsequently bound by UvrC and the second UvrB is released. If no lesion is found, the DNA wraps around the other UvrB subunit that will check the other stand for damage. The protein is UvrABC system protein B of Streptococcus sanguinis (strain SK36).